An 801-amino-acid polypeptide reads, in one-letter code: Cation/H(+) antiporter 28 (801 aa).

12 helical membrane-spanning segments follow: residues 24–44, 77–97, 113–133, 140–160, 179–199, 216–236, 252–272, 275–292, 304–324, 343–363, 371–391, and 403–423; these read ALKILVFIAIFVVRTLLHYLM, SITLNNIIEFGMICHMFVMGL, FIAYTSMITTFVLAFVTTPFL, PYIFSLALSLMASSTGSPILT, AAGVHTDMISTLLYCFGFIFF, LLMFCLFLAQVTFTSIVSPIF, GSHLVMSLAFVVLICSFPTWP, SMYNPILSAFTAGLFLPN, INYLLSTVFYPIFFFWVGFII, LLGTVIAGKVTGTVLCGLLLG, SLGLLLTTKGHFHVYLAALAI, and LIIFIIVFTVVYSPFVVMDII.

It belongs to the monovalent cation:proton antiporter 2 (CPA2) transporter (TC 2.A.37) family. CHX (TC 2.A.37.4) subfamily. As to expression, specifically expressed in pollen.

It is found in the membrane. Functionally, may operate as a cation/H(+) antiporter. This is Cation/H(+) antiporter 28 (CHX28) from Arabidopsis thaliana (Mouse-ear cress).